A 595-amino-acid chain; its full sequence is RuBisCO large subunit-binding protein subunit beta, chloroplastic (595 aa).

Residues 1-49 constitute a chloroplast transit peptide; it reads MASTFSATTSSCNLSSSAAISSFPLAAGKRNANKVVLPRKNRNVKVSAM.

It belongs to the chaperonin (HSP60) family. As to quaternary structure, oligomer of probably six alpha and six beta subunits.

The protein localises to the plastid. Its subcellular location is the chloroplast. In terms of biological role, this protein binds RuBisCO small and large subunits and is implicated in the assembly of the enzyme oligomer. This Pisum sativum (Garden pea) protein is RuBisCO large subunit-binding protein subunit beta, chloroplastic.